Consider the following 328-residue polypeptide: Ribosomal protein L11 methyltransferase (328 aa).

Residues Thr-153, Gly-174, Asp-196, and Asn-263 each coordinate S-adenosyl-L-methionine.

This sequence belongs to the methyltransferase superfamily. PrmA family.

The protein localises to the cytoplasm. It carries out the reaction L-lysyl-[protein] + 3 S-adenosyl-L-methionine = N(6),N(6),N(6)-trimethyl-L-lysyl-[protein] + 3 S-adenosyl-L-homocysteine + 3 H(+). Its function is as follows. Methylates ribosomal protein L11. This is Ribosomal protein L11 methyltransferase from Chloroflexus aurantiacus (strain ATCC 29366 / DSM 635 / J-10-fl).